We begin with the raw amino-acid sequence, 536 residues long: Global nitrogen regulator NrpR (536 aa).

A winged helix-turn-helix region spans residues 7 to 72 (VEILSILSEA…EITEKGIEEL (66 aa)). 2 NRD regions span residues 80–314 (RIGS…KGKF) and 315–536 (KVTP…YDDI).

The protein belongs to the NrpR family. Homotetramer. Binds to a single operator as a dimer and cooperatively to two operators as a dimer pair.

With respect to regulation, under nitrogen limitation, binding of the intracellular nitrogen metabolite 2-oxoglutarate to NrpR decreases the binding affinity of NrpR to DNA, leading to initiation of transcription. Functionally, transcriptional repressor of nitrogen fixation and assimilation genes. Binds to two tandem operators in the glnA and nif promoters, thereby blocking transcription of the genes. This Methanococcus maripaludis (strain DSM 14266 / JCM 13030 / NBRC 101832 / S2 / LL) protein is Global nitrogen regulator NrpR.